Consider the following 280-residue polypeptide: Hemin import ATP-binding protein HmuV (280 aa).

One can recognise an ABC transporter domain in the interval 26–260; it reads LAAAGGLRVH…GLLSEVYDQP (235 aa). 59 to 66 serves as a coordination point for ATP; the sequence is GPNGAGKS.

Belongs to the ABC transporter superfamily. Heme (hemin) importer (TC 3.A.1.14.5) family. In terms of assembly, the complex is composed of two ATP-binding proteins (HmuV), two transmembrane proteins (HmuU) and a solute-binding protein (HmuT).

The protein localises to the cell membrane. Part of the ABC transporter complex HmuTUV involved in hemin import. Responsible for energy coupling to the transport system. This chain is Hemin import ATP-binding protein HmuV, found in Streptomyces coelicolor (strain ATCC BAA-471 / A3(2) / M145).